A 146-amino-acid chain; its full sequence is MKKTKFLLVAVDILPEAIRKTAEVKELLSKRPELTVNEAVEKVGISRSAFYKYKDGVFPFYHKASGKIITLALNLEHRAGVLSKVLNFIAQYQGNVLTINQNLPLGGIANVTISIETEEMKVSIEELLEALSQMDGVSKVELVGQS.

Positions 70-145 constitute an ACT domain; that stretch reads TLALNLEHRA…GVSKVELVGQ (76 aa).

The protein belongs to the UPF0735 family.

The protein is UPF0735 ACT domain-containing protein CHY_1913 of Carboxydothermus hydrogenoformans (strain ATCC BAA-161 / DSM 6008 / Z-2901).